The sequence spans 124 residues: Aspartate 1-decarboxylase (124 aa).

The active-site Schiff-base intermediate with substrate; via pyruvic acid is S21. Pyruvic acid (Ser) is present on S21. T53 lines the substrate pocket. The Proton donor role is filled by Y54. Residue 69-71 (GAA) coordinates substrate.

It belongs to the PanD family. As to quaternary structure, heterooctamer of four alpha and four beta subunits. Pyruvate serves as cofactor. Post-translationally, is synthesized initially as an inactive proenzyme, which is activated by self-cleavage at a specific serine bond to produce a beta-subunit with a hydroxyl group at its C-terminus and an alpha-subunit with a pyruvoyl group at its N-terminus.

It localises to the cytoplasm. It carries out the reaction L-aspartate + H(+) = beta-alanine + CO2. It functions in the pathway cofactor biosynthesis; (R)-pantothenate biosynthesis; beta-alanine from L-aspartate: step 1/1. In terms of biological role, catalyzes the pyruvoyl-dependent decarboxylation of aspartate to produce beta-alanine. The protein is Aspartate 1-decarboxylase of Dehalococcoides mccartyi (strain ATCC BAA-2266 / KCTC 15142 / 195) (Dehalococcoides ethenogenes (strain 195)).